A 513-amino-acid polypeptide reads, in one-letter code: ABC transporter H family member 2 (513 aa).

An ABC transporter domain is found at 39–280; the sequence is LTMKNIHKTY…EHYQKLYKEC (242 aa). 75 to 82 lines the ATP pocket; sequence GTSGGGKT. The interval 291 to 471 is disordered; that stretch reads VTSVFKNDDD…SSSYSNNNNN (181 aa). The segment covering 324-360 has biased composition (low complexity); the sequence is SYNNNNSNLNNNSNSNSNNNSNNNNSKNYASSSSSSS. Residues 361 to 386 are compositionally biased toward polar residues; it reads VLNGKLSQSTVNNSSIYNHNNDSPFF. Residues 387-471 are compositionally biased toward low complexity; that stretch reads NSNNNNNINN…SSSYSNNNNN (85 aa).

The protein belongs to the ABC transporter superfamily.

The polypeptide is ABC transporter H family member 2 (abcH2) (Dictyostelium discoideum (Social amoeba)).